Here is a 359-residue protein sequence, read N- to C-terminus: Mannonate dehydratase (359 aa).

The protein belongs to the mannonate dehydratase family. The cofactor is Fe(2+). Mn(2+) serves as cofactor.

It catalyses the reaction D-mannonate = 2-dehydro-3-deoxy-D-gluconate + H2O. It functions in the pathway carbohydrate metabolism; pentose and glucuronate interconversion. Catalyzes the dehydration of D-mannonate. The chain is Mannonate dehydratase from Moorella thermoacetica (strain ATCC 39073 / JCM 9320).